The primary structure comprises 183 residues: Putative manganese efflux pump MntP (183 aa).

6 helical membrane-spanning segments follow: residues 8–28 (MIAL…VALG), 39–59 (IFYI…VGMA), 68–88 (FGSI…GQMI), 108–128 (LFFA…LGIF), 133–153 (MATI…GLLV), and 162–182 (GSYS…KLLF).

This sequence belongs to the MntP (TC 9.B.29) family.

The protein localises to the cell membrane. Probably functions as a manganese efflux pump. The protein is Putative manganese efflux pump MntP of Geobacillus thermodenitrificans (strain NG80-2).